A 119-amino-acid polypeptide reads, in one-letter code: Small ribosomal subunit protein bS16 (119 aa).

It belongs to the bacterial ribosomal protein bS16 family.

This chain is Small ribosomal subunit protein bS16, found in Amoebophilus asiaticus (strain 5a2).